Here is a 371-residue protein sequence, read N- to C-terminus: Peptide chain release factor 2 (371 aa).

Q252 is modified (N5-methylglutamine).

The protein belongs to the prokaryotic/mitochondrial release factor family. Post-translationally, methylated by PrmC. Methylation increases the termination efficiency of RF2.

It localises to the cytoplasm. Peptide chain release factor 2 directs the termination of translation in response to the peptide chain termination codons UGA and UAA. In Staphylococcus haemolyticus (strain JCSC1435), this protein is Peptide chain release factor 2.